The primary structure comprises 385 residues: Citrate synthase (385 aa).

Residues H223, H263, and D318 contribute to the active site.

The protein belongs to the citrate synthase family. Homodimer.

It catalyses the reaction oxaloacetate + acetyl-CoA + H2O = citrate + CoA + H(+). Its pathway is carbohydrate metabolism; tricarboxylic acid cycle; isocitrate from oxaloacetate: step 1/2. With respect to regulation, allosterically inhibited by NADH. This chain is Citrate synthase (gltA), found in Thermoplasma acidophilum (strain ATCC 25905 / DSM 1728 / JCM 9062 / NBRC 15155 / AMRC-C165).